The following is a 364-amino-acid chain: UDP-N-acetylglucosamine--N-acetylmuramyl-(pentapeptide) pyrophosphoryl-undecaprenol N-acetylglucosamine transferase (364 aa).

Residues 14–16, N126, R163, S190, I246, 265–270, and Q291 contribute to the UDP-N-acetyl-alpha-D-glucosamine site; these read TGG and ALTVSE.

It belongs to the glycosyltransferase 28 family. MurG subfamily.

Its subcellular location is the cell inner membrane. It catalyses the reaction di-trans,octa-cis-undecaprenyl diphospho-N-acetyl-alpha-D-muramoyl-L-alanyl-D-glutamyl-meso-2,6-diaminopimeloyl-D-alanyl-D-alanine + UDP-N-acetyl-alpha-D-glucosamine = di-trans,octa-cis-undecaprenyl diphospho-[N-acetyl-alpha-D-glucosaminyl-(1-&gt;4)]-N-acetyl-alpha-D-muramoyl-L-alanyl-D-glutamyl-meso-2,6-diaminopimeloyl-D-alanyl-D-alanine + UDP + H(+). The protein operates within cell wall biogenesis; peptidoglycan biosynthesis. Its function is as follows. Cell wall formation. Catalyzes the transfer of a GlcNAc subunit on undecaprenyl-pyrophosphoryl-MurNAc-pentapeptide (lipid intermediate I) to form undecaprenyl-pyrophosphoryl-MurNAc-(pentapeptide)GlcNAc (lipid intermediate II). In Shewanella loihica (strain ATCC BAA-1088 / PV-4), this protein is UDP-N-acetylglucosamine--N-acetylmuramyl-(pentapeptide) pyrophosphoryl-undecaprenol N-acetylglucosamine transferase.